The sequence spans 473 residues: Heavy metal-associated isoprenylated plant protein 32 (473 aa).

Residues 9-72 enclose the HMA domain; the sequence is IQTCVLKVNI…KLAKSGKHAE (64 aa). Positions 20 and 23 each coordinate a metal cation. Disordered stretches follow at residues 96–139, 162–230, and 246–343; these read QIDH…KMGQ, KLPP…PNMT, and ANLA…QNMS. Residues 118–131 are compositionally biased toward gly residues; sequence KNGGGGGGGGGGGN. The span at 187–217 shows a compositional bias: acidic residues; sequence PEDDDDDDFSDEFDDEFTDDDDDEFDDEFDD. Positions 253–339 are enriched in gly residues; it reads AKNGGKGAPA…GFRPMGGGGP (87 aa). Residue Cys-470 is modified to Cysteine methyl ester. Cys-470 carries the S-farnesyl cysteine lipid modification. The propeptide at 471–473 is removed in mature form; the sequence is DIM.

The protein belongs to the HIPP family.

Heavy-metal-binding protein. This chain is Heavy metal-associated isoprenylated plant protein 32, found in Arabidopsis thaliana (Mouse-ear cress).